Reading from the N-terminus, the 365-residue chain is Peptide chain release factor 2 (365 aa).

N5-methylglutamine is present on glutamine 251.

It belongs to the prokaryotic/mitochondrial release factor family. Post-translationally, methylated by PrmC. Methylation increases the termination efficiency of RF2.

Its subcellular location is the cytoplasm. Peptide chain release factor 2 directs the termination of translation in response to the peptide chain termination codons UGA and UAA. The protein is Peptide chain release factor 2 of Campylobacter jejuni subsp. jejuni serotype O:2 (strain ATCC 700819 / NCTC 11168).